A 293-amino-acid polypeptide reads, in one-letter code: MAQITAAQVKELRDRTQVGMMDAKKALVAADGDMDKAIDVLREKGLAKAAKKSGNIAAEGLAEIAVNGNTAAIIEVNSETDFVASNDQFKDYVNNVAAAIAANKPADLEAAKATKMSDGQTVDEGAIALTTVIGEKISLRRFQVVEKTDNEHFGKYLHNGGQIAALTVIEGADDDTAKDVAMHVAAINPEYLDRTKVPAEELKHQTDIFTEETKNEGKPEKIVPRIVEGRVNKWLGEISLVDQEFVKDPDQTVAKYVAAKGGKVKGFVRYEVGEGIEKKQENFADEVMDQIKG.

The involved in Mg(2+) ion dislocation from EF-Tu stretch occupies residues 80-83 (TDFV).

Belongs to the EF-Ts family.

The protein resides in the cytoplasm. Associates with the EF-Tu.GDP complex and induces the exchange of GDP to GTP. It remains bound to the aminoacyl-tRNA.EF-Tu.GTP complex up to the GTP hydrolysis stage on the ribosome. The sequence is that of Elongation factor Ts from Lacticaseibacillus casei (strain BL23) (Lactobacillus casei).